A 145-amino-acid polypeptide reads, in one-letter code: Large ribosomal subunit protein eL32 (145 aa).

Belongs to the eukaryotic ribosomal protein eL32 family.

In Aeropyrum pernix (strain ATCC 700893 / DSM 11879 / JCM 9820 / NBRC 100138 / K1), this protein is Large ribosomal subunit protein eL32 (rpl32e).